The chain runs to 252 residues: 2-succinyl-6-hydroxy-2,4-cyclohexadiene-1-carboxylate synthase (252 aa).

The protein belongs to the AB hydrolase superfamily. MenH family. Monomer.

It carries out the reaction 5-enolpyruvoyl-6-hydroxy-2-succinyl-cyclohex-3-ene-1-carboxylate = (1R,6R)-6-hydroxy-2-succinyl-cyclohexa-2,4-diene-1-carboxylate + pyruvate. It participates in quinol/quinone metabolism; 1,4-dihydroxy-2-naphthoate biosynthesis; 1,4-dihydroxy-2-naphthoate from chorismate: step 3/7. It functions in the pathway quinol/quinone metabolism; menaquinone biosynthesis. In terms of biological role, catalyzes a proton abstraction reaction that results in 2,5-elimination of pyruvate from 2-succinyl-5-enolpyruvyl-6-hydroxy-3-cyclohexene-1-carboxylate (SEPHCHC) and the formation of 2-succinyl-6-hydroxy-2,4-cyclohexadiene-1-carboxylate (SHCHC). This chain is 2-succinyl-6-hydroxy-2,4-cyclohexadiene-1-carboxylate synthase, found in Escherichia fergusonii (strain ATCC 35469 / DSM 13698 / CCUG 18766 / IAM 14443 / JCM 21226 / LMG 7866 / NBRC 102419 / NCTC 12128 / CDC 0568-73).